Consider the following 152-residue polypeptide: D-aminoacyl-tRNA deacylase (152 aa).

The Gly-cisPro motif, important for rejection of L-amino acids motif lies at 138–139 (GP).

It belongs to the DTD family. In terms of assembly, homodimer.

Its subcellular location is the cytoplasm. It carries out the reaction glycyl-tRNA(Ala) + H2O = tRNA(Ala) + glycine + H(+). The enzyme catalyses a D-aminoacyl-tRNA + H2O = a tRNA + a D-alpha-amino acid + H(+). Functionally, an aminoacyl-tRNA editing enzyme that deacylates mischarged D-aminoacyl-tRNAs. Also deacylates mischarged glycyl-tRNA(Ala), protecting cells against glycine mischarging by AlaRS. Acts via tRNA-based rather than protein-based catalysis; rejects L-amino acids rather than detecting D-amino acids in the active site. By recycling D-aminoacyl-tRNA to D-amino acids and free tRNA molecules, this enzyme counteracts the toxicity associated with the formation of D-aminoacyl-tRNA entities in vivo and helps enforce protein L-homochirality. In Chloroherpeton thalassium (strain ATCC 35110 / GB-78), this protein is D-aminoacyl-tRNA deacylase.